The chain runs to 71 residues: DNA-directed RNA polymerase subunit omega (71 aa).

It belongs to the RNA polymerase subunit omega family. As to quaternary structure, the RNAP catalytic core consists of 2 alpha, 1 beta/beta' and 1 omega subunit. When a sigma factor is associated with the core the holoenzyme is formed, which can initiate transcription.

It carries out the reaction RNA(n) + a ribonucleoside 5'-triphosphate = RNA(n+1) + diphosphate. Its function is as follows. Promotes RNA polymerase assembly. Latches the N- and C-terminal regions of the beta' subunit thereby facilitating its interaction with the beta and alpha subunits. This is DNA-directed RNA polymerase subunit omega from Wolinella succinogenes (strain ATCC 29543 / DSM 1740 / CCUG 13145 / JCM 31913 / LMG 7466 / NCTC 11488 / FDC 602W) (Vibrio succinogenes).